Here is a 456-residue protein sequence, read N- to C-terminus: G-protein coupled receptor 39 (456 aa).

Residues 1–34 are Extracellular-facing; sequence MASSSGSNHICSRVIDHSHVPEFEVATWIKITLI. Intrachain disulfides connect C11-C191 and C108-C210. 2 residues coordinate Zn(2+): H17 and H19. The helical transmembrane segment at 35–55 threads the bilayer; the sequence is LVYLIIFVVGILGNSVTIRVT. The Cytoplasmic segment spans residues 56–69; that stretch reads QVLQKKGYLQKEVT. The chain crosses the membrane as a helical span at residues 70 to 89; the sequence is DHMVSLACSDILVFLIGMPM. Residues 90 to 109 are Extracellular-facing; that stretch reads EFYSIIWNPLTTPSYALSCK. Residues 110–131 form a helical membrane-spanning segment; sequence LHTFLFETCSYATLLHVLTLSF. Residues 132–151 are Cytoplasmic-facing; sequence ERYIAICHPFKYKAVSGPRQ. A helical transmembrane segment spans residues 152 to 172; sequence VKLLIGFVWVTSALVALPLLF. Over 173-217 the chain is Extracellular; the sequence is AMGIEYPLVNVPTHKGLNCNLSRTRHHDEPGNSNMSICTNLSNRW. N-linked (GlcNAc...) asparagine glycans are attached at residues N192 and N206. Residues 218 to 242 form a helical membrane-spanning segment; it reads EVFQSSIFGAFAVYLVVLASVAFMC. The Cytoplasmic portion of the chain corresponds to 243–283; that stretch reads WNMMKVLMKSKQGTLAGTGPQLQLRKSESEESRTARRQTII. A helical membrane pass occupies residues 284 to 305; that stretch reads FLRLIVVTLAVCWMPNQIRRIM. The Extracellular segment spans residues 306–323; sequence AAAKPKHDWTRTYFRAYM. The helical transmembrane segment at 324-344 threads the bilayer; the sequence is ILLPFSDTFFYLSSVVNPLLY. Residues 345-456 lie on the Cytoplasmic side of the membrane; the sequence is NVSSQQFRKV…TENSLQEQEV (112 aa). At S397 the chain carries Phosphoserine. Residues 415–456 form a disordered region; it reads FQTEAKPGEAKPQPLSPESPQTGSETKPAGSTTENSLQEQEV. The segment covering 430–456 has biased composition (polar residues); that stretch reads SPESPQTGSETKPAGSTTENSLQEQEV.

It belongs to the G-protein coupled receptor 1 family. As to quaternary structure, interacts with HTR1A. Interacts with GALR1. As to expression, expression is detected in septumamygdala, parietal cells, enterocytes, neurons and pancreas, in peripheral organs such as the duodenum and kidney but not in the pituitary and hypothalamus.

It is found in the cell membrane. Functionally, zinc-sensing receptor that can sense changes in extracellular Zn(2+), mediate Zn(2+) signal transmission, and participates in the regulation of numerous physiological processes including glucose homeostasis regulation, gastrointestinal mobility, hormone secretion and cell death. Activation by Zn(2+) in keratinocytes increases the intracellular concentration of Ca(2+) and activates the ERK/MAPK and PI3K/AKT signaling pathways leading to epithelial repair. Plays an essential role in normal wound healing by inducing the production of cytokines including the major inflammatory cytokine IL6 via the PKC/MAPK/CEBPB pathway. Regulates adipose tissue metabolism, especially lipolysis, and regulates the function of lipases, such as hormone-sensitive lipase and adipose triglyceride lipase. Plays a role in the inhibition of cell death and protects against oxidative, endoplasmic reticulum and mitochondrial stress by inducing secretion of the cytoprotective pigment epithelium-derived growth factor (PEDF) and probably other protective transcripts in a GNA13/RHOA/SRE-dependent manner. Forms dynamic heteroreceptor complexes with HTR1A and GALR1 depending on cell type or specific physiological states, resulting in signaling diversity: HTR1A-GPR39 shows additive increase in signaling along the serum response element (SRE) and NF-kappa-B pathways while GALR1 acts as an antagonist blocking SRE. The chain is G-protein coupled receptor 39 (Gpr39) from Mus musculus (Mouse).